A 227-amino-acid chain; its full sequence is Cytochrome c oxidase subunit 2 (227 aa).

Topologically, residues 1–14 (MAYPMQLGFQDATS) are mitochondrial intermembrane. The chain crosses the membrane as a helical span at residues 15–45 (PIMEELLHFHDHTLMIVFLISSLVLYVISLM). Over 46-59 (LTTKLTHTSTMDAQ) the chain is Mitochondrial matrix. Residues 60 to 87 (EVETIWTILPAIILILIALPSLRILYMM) form a helical membrane-spanning segment. Topologically, residues 88-227 (DEINNPSLTV…YFEKWSASML (140 aa)) are mitochondrial intermembrane. Positions 161, 196, 198, 200, 204, and 207 each coordinate Cu cation. Glu198 contacts Mg(2+).

Belongs to the cytochrome c oxidase subunit 2 family. Component of the cytochrome c oxidase (complex IV, CIV), a multisubunit enzyme composed of 14 subunits. The complex is composed of a catalytic core of 3 subunits MT-CO1, MT-CO2 and MT-CO3, encoded in the mitochondrial DNA, and 11 supernumerary subunits COX4I, COX5A, COX5B, COX6A, COX6B, COX6C, COX7A, COX7B, COX7C, COX8 and NDUFA4, which are encoded in the nuclear genome. The complex exists as a monomer or a dimer and forms supercomplexes (SCs) in the inner mitochondrial membrane with NADH-ubiquinone oxidoreductase (complex I, CI) and ubiquinol-cytochrome c oxidoreductase (cytochrome b-c1 complex, complex III, CIII), resulting in different assemblies (supercomplex SCI(1)III(2)IV(1) and megacomplex MCI(2)III(2)IV(2)). Found in a complex with TMEM177, COA6, COX18, COX20, SCO1 and SCO2. Interacts with TMEM177 in a COX20-dependent manner. Interacts with COX20. Interacts with COX16. Requires Cu cation as cofactor.

The protein localises to the mitochondrion inner membrane. The catalysed reaction is 4 Fe(II)-[cytochrome c] + O2 + 8 H(+)(in) = 4 Fe(III)-[cytochrome c] + 2 H2O + 4 H(+)(out). In terms of biological role, component of the cytochrome c oxidase, the last enzyme in the mitochondrial electron transport chain which drives oxidative phosphorylation. The respiratory chain contains 3 multisubunit complexes succinate dehydrogenase (complex II, CII), ubiquinol-cytochrome c oxidoreductase (cytochrome b-c1 complex, complex III, CIII) and cytochrome c oxidase (complex IV, CIV), that cooperate to transfer electrons derived from NADH and succinate to molecular oxygen, creating an electrochemical gradient over the inner membrane that drives transmembrane transport and the ATP synthase. Cytochrome c oxidase is the component of the respiratory chain that catalyzes the reduction of oxygen to water. Electrons originating from reduced cytochrome c in the intermembrane space (IMS) are transferred via the dinuclear copper A center (CU(A)) of subunit 2 and heme A of subunit 1 to the active site in subunit 1, a binuclear center (BNC) formed by heme A3 and copper B (CU(B)). The BNC reduces molecular oxygen to 2 water molecules using 4 electrons from cytochrome c in the IMS and 4 protons from the mitochondrial matrix. The chain is Cytochrome c oxidase subunit 2 (MT-CO2) from Gazella spekei (Speke's gazelle).